Consider the following 401-residue polypeptide: ATP phosphoribosyltransferase regulatory subunit (401 aa).

The segment at 373 to 401 is disordered; it reads PGQQGGAAAQGCDRRLQQDDGGGWVTRPL. The segment covering 392-401 has biased composition (gly residues); it reads DGGGWVTRPL.

The protein belongs to the class-II aminoacyl-tRNA synthetase family. HisZ subfamily. Heteromultimer composed of HisG and HisZ subunits.

Its subcellular location is the cytoplasm. It functions in the pathway amino-acid biosynthesis; L-histidine biosynthesis; L-histidine from 5-phospho-alpha-D-ribose 1-diphosphate: step 1/9. Required for the first step of histidine biosynthesis. May allow the feedback regulation of ATP phosphoribosyltransferase activity by histidine. This Alkalilimnicola ehrlichii (strain ATCC BAA-1101 / DSM 17681 / MLHE-1) protein is ATP phosphoribosyltransferase regulatory subunit.